We begin with the raw amino-acid sequence, 381 residues long: Phosphatidyl-myo-inositol mannosyltransferase (381 aa).

Y9 and G16 together coordinate GDP-alpha-D-mannose. A 1,2-diacyl-sn-glycero-3-phospho-(1D-myo-inositol)-binding positions include Q18, 69 to 70 (FN), and R75. Residues R204, 209–210 (RK), 251–253 (LDD), R256, 274–278 (ESFGI), and E282 each bind GDP-alpha-D-mannose.

This sequence belongs to the glycosyltransferase group 1 family. Glycosyltransferase 4 subfamily. As to quaternary structure, monomer. It depends on Mg(2+) as a cofactor.

It is found in the cell membrane. The enzyme catalyses a 1,2-diacyl-sn-glycero-3-phospho-(1D-myo-inositol) + GDP-alpha-D-mannose = a 1,2-diacyl-sn-glycero-3-phospho-[alpha-D-mannopyranosyl-(1&lt;-&gt;6)-D-myo-inositol] + GDP + H(+). It functions in the pathway phospholipid metabolism; phosphatidylinositol metabolism. In terms of biological role, involved in the biosynthesis of phosphatidyl-myo-inositol mannosides (PIM) which are early precursors in the biosynthesis of lipomannans (LM) and lipoarabinomannans (LAM). Catalyzes the addition of a mannosyl residue from GDP-D-mannose (GDP-Man) to the position 2 of the carrier lipid phosphatidyl-myo-inositol (PI) to generate a phosphatidyl-myo-inositol bearing an alpha-1,2-linked mannose residue (PIM1). The chain is Phosphatidyl-myo-inositol mannosyltransferase from Propionibacterium freudenreichii subsp. shermanii (strain ATCC 9614 / DSM 4902 / CIP 103027 / NCIMB 8099 / CIRM-BIA1).